Reading from the N-terminus, the 275-residue chain is 4-deoxy-L-threo-5-hexosulose-uronate ketol-isomerase (275 aa).

Residues histidine 193, histidine 195, glutamate 200, and histidine 242 each coordinate Zn(2+).

This sequence belongs to the KduI family. Zn(2+) serves as cofactor.

The enzyme catalyses 5-dehydro-4-deoxy-D-glucuronate = 3-deoxy-D-glycero-2,5-hexodiulosonate. It participates in glycan metabolism; pectin degradation; 2-dehydro-3-deoxy-D-gluconate from pectin: step 4/5. Functionally, catalyzes the isomerization of 5-dehydro-4-deoxy-D-glucuronate to 3-deoxy-D-glycero-2,5-hexodiulosonate. The sequence is that of 4-deoxy-L-threo-5-hexosulose-uronate ketol-isomerase from Bacillus licheniformis (strain ATCC 14580 / DSM 13 / JCM 2505 / CCUG 7422 / NBRC 12200 / NCIMB 9375 / NCTC 10341 / NRRL NRS-1264 / Gibson 46).